The chain runs to 306 residues: MPLNGDLDRQIEQLMECKPLGEADVKILCDQAKAILVEEYNVQPVKCPVTVCGDIHGQFYDLIELFRIGGNAPDTNYLFMGDYVDRGYYSVETVSLLVALKVRYRDRLTILRGNHESRQITQVYGFYDECLRKYGNANVWKYFTDLFDYLPLTALIESQVFCLHGGLSPSLDTLDNIRSLDRIQEVPHEGPMCDLLWSDPDDRCGWGISPRGAGYTFGQDIATQFNHNNGLSLISRAHQLVMEGYNWCQEKNVVTVFSAPNYCYRCGNMAAILEIGEKMEQNFLQFDPAPRQVEPDTTRKTPDYFL.

D54, H56, D82, and N114 together coordinate Mn(2+). Residue H115 is the Proton donor of the active site. Positions 164 and 238 each coordinate Mn(2+). L306 bears the Leucine methyl ester mark.

This sequence belongs to the PPP phosphatase family. PP-2A subfamily. As to quaternary structure, PP2A consists of a common heterodimeric core enzyme, composed of a 36 kDa catalytic subunit (subunit C) and a 65 kDa constant regulatory subunit (subunit A), that associates with a variety of regulatory subunits such as subunits B (the R2/B/PR55/B55, R3/B''/PR72/PR130/PR59 and R5/B'/B56 families). Interacts with TAF12B. Interacts with SRK2E/OST1. Interacts with TAP46. Mn(2+) is required as a cofactor. In terms of processing, reversibly methyl esterified on Leu-306 by leucine carboxyl methyltransferase 1 (LCMT1) and pectin methylesterase 1 (PME1). Carboxyl methylation influences the affinity of the catalytic subunit for the different regulatory subunits, thereby modulating the PP2A holoenzyme's substrate specificity, enzyme activity and cellular localization. Phosphorylation of either threonine (by autophosphorylation-activated protein kinase) or tyrosine results in inactivation of the phosphatase. Auto-dephosphorylation has been suggested as a mechanism for reactivation.

The protein resides in the cytoplasm. The enzyme catalyses O-phospho-L-seryl-[protein] + H2O = L-seryl-[protein] + phosphate. The catalysed reaction is O-phospho-L-threonyl-[protein] + H2O = L-threonyl-[protein] + phosphate. The protein is Serine/threonine-protein phosphatase PP2A-1 catalytic subunit of Arabidopsis thaliana (Mouse-ear cress).